We begin with the raw amino-acid sequence, 305 residues long: MASRQPEVPALEASGPLGKMSLPIGIYRRALSYDDTLEDPAPMTPPPSDMGSVPWKPVIPERKYQHLAKVEEGEASLPSPAMTLSSAIDSVDKVPVVKAKATHVIMNSLITKQTQESIQHFERQAGLRDAGYTPHKGLTTEETKYLRVAEALHKLKLQSGEITKEERQPASAQSTPSTTPHSSPKQRSRGWFTSGSSTALPGPNPSTMDSGSGDKDRNLSDKWSLFGPRSLQKYDSGSSTTQAYRGVQKPSPLELIRAQANRMAEDPAALKPPKMDIPVMEGKKQPPRAHNLKPRDLNVLTPTGF.

Disordered stretches follow at residues 1–20 and 37–56; these read MASR…LGKM and LEDP…VPWK. The residue at position 44 (Thr-44) is a Phosphothreonine. Positions 67–77 match the Flavin-containing monooxygenase motif motif; sequence LAKVEEGEASL. Residues 159-305 are disordered; it reads SGEITKEERQ…DLNVLTPTGF (147 aa). Residues 169 to 183 are compositionally biased toward low complexity; the sequence is PASAQSTPSTTPHSS. Phosphothreonine is present on Thr-175. A phosphoserine mark is found at Ser-182 and Ser-183. Polar residues-rich tracts occupy residues 191 to 210 and 233 to 243; these read WFTS…TMDS and KYDSGSSTTQA.

This sequence belongs to the P33MONOX family. In terms of assembly, interacts with NELFB, NOL12 and PRNP.

It is found in the cytoplasm. In terms of biological role, potential NADPH-dependent oxidoreductase. May be involved in the regulation of neuronal survival, differentiation and axonal outgrowth. This is Putative monooxygenase p33MONOX (P33MONOX) from Pongo abelii (Sumatran orangutan).